The primary structure comprises 509 residues: FAD-linked oxidoreductase dpmaF (509 aa).

The signal sequence occupies residues 1-21 (MTRLSLQLIAGLAGQAWLVNS). The 173-residue stretch at 59 to 231 (LQYEPIAVAV…AEYGFETFPA (173 aa)) folds into the FAD-binding PCMH-type domain. Residues Asn-125, Asn-193, and Asn-281 are each glycosylated (N-linked (GlcNAc...) asparagine).

The protein belongs to the oxygen-dependent FAD-linked oxidoreductase family. FAD serves as cofactor.

It functions in the pathway secondary metabolite biosynthesis; terpenoid biosynthesis. Functionally, FAD-linked oxidoreductase; part of the gene cluster that mediates the biosynthesis of the diterpenoid pyrones subglutinols A and B. The first step of the pathway is the synthesis of the alpha-pyrone moiety by the polyketide synthase dpmaA via condensation of one acetyl-CoA starter unit with 3 malonyl-CoA units and 2 methylations. The alpha-pyrone is then combined with geranylgeranyl pyrophosphate (GGPP) formed by the GGPP synthase dpmaD through the action of the prenyltransferase dpmaC to yield a linear alpha-pyrone diterpenoid. Subsequent steps in the diterpenoid pyrone biosynthetic pathway involve the decalin core formation, which is initiated by the epoxidation of the C10-C11 olefin by the FAD-dependent oxidoreductase dpmaE, and is followed by a cyclization cascade catalyzed by the terpene cyclase dpmaB. The dehydrogenase dpmaF is then involved in tetrahydrofuran (THF) ring formation at the C5 unit to complete the formation of subglutinols A and B. The chain is FAD-linked oxidoreductase dpmaF from Metarhizium anisopliae (Entomophthora anisopliae).